A 580-amino-acid polypeptide reads, in one-letter code: FAD-dependent monooxygenase DEP4 (580 aa).

47–50 is a binding site for FAD; sequence VWSK. 58–60 is a binding site for NADP(+); that stretch reads FAQ. An FAD-binding site is contributed by valine 112. Residues 186–205, 222–223, and 354–355 each bind NADP(+); these read VGRSKSSYDAVYHLLCAGKK, AP, and DI. Position 473 (methionine 473) interacts with FAD.

The protein belongs to the FAD-binding monooxygenase family. The cofactor is FAD.

It functions in the pathway polyketide biosynthesis. In terms of biological role, part of the gene cluster that mediates the biosynthesis of depudecin, a highly oxidized eleven-carbon linear polyketide that acts as a histone deacetylase (HDAC) inhibitor and makes a small contribution to pathogenesis. The reducing polyketide synthase DEP5 is the central enzyme in depudecin biosynthesis by yielding the backbone polyketide chain. The monooxygenases DEP2 and DEP4, as well as the uncharacterized protein DEP1, then act as tailoring enzymes to modify the intermediate polyketide chain into depudecin. The polypeptide is FAD-dependent monooxygenase DEP4 (Fusarium langsethiae).